An 837-amino-acid chain; its full sequence is A disintegrin and metalloproteinase with thrombospondin motifs 4 (837 aa).

Residues methionine 1–leucine 51 form the signal peptide. The propeptide occupies alanine 52–arginine 212. N-linked (GlcNAc...) asparagine glycosylation is present at asparagine 68. The Cysteine switch signature appears at proline 192–proline 199. Cysteine 194 is a binding site for Zn(2+). A Peptidase M12B domain is found at arginine 218–proline 428. Intrachain disulfides connect cysteine 293–cysteine 345, cysteine 322–cysteine 327, cysteine 339–cysteine 423, cysteine 377–cysteine 407, cysteine 449–cysteine 472, cysteine 460–cysteine 482, cysteine 467–cysteine 501, cysteine 495–cysteine 506, cysteine 532–cysteine 569, cysteine 536–cysteine 574, and cysteine 547–cysteine 559. Histidine 361 is a binding site for Zn(2+). Glutamate 362 is a catalytic residue. Zn(2+) is bound by residues histidine 365 and histidine 371. The region spanning threonine 437–glutamine 519 is the Disintegrin domain. The TSP type-1 domain occupies alanine 520–proline 575. The spacer stretch occupies residues serine 686–lysine 837.

Interacts with SRPX2. It depends on Zn(2+) as a cofactor. In terms of processing, the precursor is cleaved by a furin endopeptidase. Post-translationally, glycosylated. Can be O-fucosylated by POFUT2 on a serine or a threonine residue found within the consensus sequence C1-X(2)-(S/T)-C2-G of the TSP type-1 repeat domains where C1 and C2 are the first and second cysteine residue of the repeat, respectively. Fucosylated repeats can then be further glycosylated by the addition of a beta-1,3-glucose residue by the glucosyltransferase, B3GALTL. Fucosylation mediates the efficient secretion of ADAMTS family members. Can also be C-glycosylated with one or two mannose molecules on tryptophan residues within the consensus sequence W-X-X-W of the TPRs, and N-glycosylated. These other glycosylations can also facilitate secretion. As to expression, expressed in brain, lung and heart. Expressed at very low level in placenta and skeletal muscles. Isoform 2: Detected in osteoarthritic synovium.

It is found in the secreted. The protein localises to the extracellular space. It localises to the extracellular matrix. It carries out the reaction Glutamyl endopeptidase. Bonds cleaved include 370-Thr-Glu-Gly-Glu-|-Ala-Arg-Gly-Ser-377 in the interglobular domain of mammalian aggrecan.. Its function is as follows. Cleaves aggrecan, a cartilage proteoglycan, at the '392-Glu-|-Ala-393' site and may be involved in its turnover. Also cleaves COMP. May play an important role in the destruction of aggrecan in arthritic diseases. Could be a critical factor in the exacerbation of neurodegeneration in Alzheimer disease. The chain is A disintegrin and metalloproteinase with thrombospondin motifs 4 (ADAMTS4) from Homo sapiens (Human).